Here is a 313-residue protein sequence, read N- to C-terminus: Potassium channel subfamily K member 6 (313 aa).

Residues 1 to 4 (MRRG) lie on the Cytoplasmic side of the membrane. The helical transmembrane segment at 5–25 (ALLAGALAAYAAYLVLGALLV) threads the bilayer. Residues Asn-79 and Asn-85 are each glycosylated (N-linked (GlcNAc...) asparagine). Residues 90–115 (AWDFASALFFASTLITTVGYGYTTPL) constitute an intramembrane region (pore-forming). The K(+) site is built by Thr-106, Val-107, Gly-108, and Tyr-109. The interval 106–111 (TVGYGY) is selectivity filter 1. Residues 121-141 (AFSIAFALLGVPTTMLLLTAS) form a helical membrane-spanning segment. Over 142 to 172 (AQRLSLLLTHVPLSWLSMRWGWDPRRAACWH) the chain is Cytoplasmic. Residues 173–193 (LVALLGVVVTVCFLVPAVIFA) form a helical membrane-spanning segment. Residues 199–223 (WSFLDAFYFCFISLSTIGLGDYVPG) constitute an intramembrane region (pore-forming). The K(+) site is built by Thr-214, Ile-215, and Gly-216. The interval 214-219 (TIGLGD) is selectivity filter 2. Residues 236–256 (VLVTVYLFLGLVAMVLVLQTF) form a helical membrane-spanning segment. At 257–313 (RHVSDLHGLTELILLPPPCPASFNADEDDRVDILGPQPESHQQLSASSHTDYASIPR) the chain is on the cytoplasmic side. The short motif at 282–290 (DEDDRVDIL) is the Lysosomal targeting signal element. Residues 288–313 (DILGPQPESHQQLSASSHTDYASIPR) are disordered. Residues 295-307 (ESHQQLSASSHTD) show a composition bias toward polar residues. Residues 308–312 (YASIP) carry the Lysosomal targeting signal motif.

It belongs to the two pore domain potassium channel (TC 1.A.1.8) family. As to quaternary structure, homodimer; disulfide-linked. N-glycosylation is necessary for targeting to lysosomes. Widespread expression, detected in all tissues tested except for skeletal muscle. Strongest expression in placenta, pancreas, heart, colon and spleen, lower levels detected in peripheral blood leukocytes, lung, liver, kidney and thymus. Lowest expression detected in brain.

Its subcellular location is the late endosome membrane. It localises to the lysosome membrane. It catalyses the reaction K(+)(in) = K(+)(out). K(+) channel that conducts outward rectifying currents at the membranes of the endolysosomal system. Active in lysosomes where it regulates lysosome numbers and size. In macrophages, enables K(+) efflux coupled to ATP-induced NLRP3 inflammasome activation upon bacterial infection. Cooperates with ATP-gated P2RX7 channels to activate NLRP3 inflammasome, with P2RX7 conducting Ca(2+) and Na(+) influx that sets the membrane potential for K(+) efflux. Its function is as follows. Does not display channel activity. The sequence is that of Potassium channel subfamily K member 6 from Homo sapiens (Human).